The primary structure comprises 264 residues: Undecaprenyl-diphosphatase (264 aa).

8 helical membrane passes run 1-21, 39-59, 83-103, 113-133, 143-163, 184-204, 220-240, and 243-263; these read MEISHVIVLALVQGISEFLPI, QGLAFDVAVHVGTLSAILFYF, SLLVWCVGFATIPVGIFGLLF, SGVVIAVTTIIFGIALYFADL, MTIKFALIIGLAQAVALIPGV, ANFSFLLSIPVIILAGGLESI, LGVIISAVSAYICVKLFMGII, and IRMLPFVIYRLILGAFLLYLF.

The protein belongs to the UppP family.

It localises to the cell inner membrane. It carries out the reaction di-trans,octa-cis-undecaprenyl diphosphate + H2O = di-trans,octa-cis-undecaprenyl phosphate + phosphate + H(+). Catalyzes the dephosphorylation of undecaprenyl diphosphate (UPP). Confers resistance to bacitracin. The polypeptide is Undecaprenyl-diphosphatase (Campylobacter concisus (strain 13826)).